The sequence spans 284 residues: Putative ABC transporter ATP-binding protein SCO5958 (284 aa).

Positions valine 15–leucine 250 constitute an ABC transporter domain. Glycine 48 to threonine 55 contributes to the ATP binding site.

Belongs to the ABC transporter superfamily.

It localises to the cell membrane. Its function is as follows. Probably part of an ABC transporter complex. Responsible for energy coupling to the transport system. This chain is Putative ABC transporter ATP-binding protein SCO5958, found in Streptomyces coelicolor (strain ATCC BAA-471 / A3(2) / M145).